Consider the following 77-residue polypeptide: Conotoxin King-Kong 2 (77 aa).

The signal sequence occupies residues Met-1 to Ala-22. Residues Asp-23–Asn-49 constitute a propeptide that is removed on maturation. 3 cysteine pairs are disulfide-bonded: Cys-52-Cys-67, Cys-59-Cys-71, and Cys-66-Cys-76. Cys-76 carries the cysteine amide modification.

Belongs to the conotoxin O1 superfamily. As to expression, expressed by the venom duct.

Its subcellular location is the secreted. The protein is Conotoxin King-Kong 2 of Conus textile (Cloth-of-gold cone).